A 64-amino-acid polypeptide reads, in one-letter code: Large ribosomal subunit protein bL35 (64 aa).

Residues 22–44 (IMKQQAGMRHNLEVKSSKRKARL) form a disordered region.

This sequence belongs to the bacterial ribosomal protein bL35 family.

This chain is Large ribosomal subunit protein bL35, found in Clavibacter sepedonicus (Clavibacter michiganensis subsp. sepedonicus).